The chain runs to 76 residues: Probable insulin-like peptide alpha-type 3 (76 aa).

Residues 1-18 (MFVLLIILSIILAQVTDA) form the signal peptide. Cystine bridges form between C28–C58, C40–C71, and C46–C72.

This sequence belongs to the insulin family.

It is found in the secreted. This chain is Probable insulin-like peptide alpha-type 3 (ins-23), found in Caenorhabditis elegans.